Here is a 124-residue protein sequence, read N- to C-terminus: Fluoride-specific ion channel FluC (124 aa).

4 consecutive transmembrane segments (helical) span residues 5–25 (LLVS…AVWF), 32–52 (FAFG…ITLG), 61–81 (LLFV…SAEV), and 94–114 (LAVI…GILV). The Na(+) site is built by Gly69 and Thr72.

Belongs to the fluoride channel Fluc/FEX (TC 1.A.43) family.

It is found in the cell inner membrane. The enzyme catalyses fluoride(in) = fluoride(out). With respect to regulation, na(+) is not transported, but it plays an essential structural role and its presence is essential for fluoride channel function. In terms of biological role, fluoride-specific ion channel. Important for reducing fluoride concentration in the cell, thus reducing its toxicity. The sequence is that of Fluoride-specific ion channel FluC from Haemophilus ducreyi (strain 35000HP / ATCC 700724).